Here is a 494-residue protein sequence, read N- to C-terminus: 4-trimethylaminobutyraldehyde dehydrogenase (494 aa).

Ser2 is modified (N-acetylserine). Residue Lys30 is modified to N6-acetyllysine; alternate. N6-succinyllysine; alternate is present on Lys30. Lys59 is modified (N6-succinyllysine). NAD(+)-binding positions include Lys180 and 232 to 236 (GSVPT). Glu254 acts as the Proton acceptor in catalysis. The active-site Nucleophile is the Cys288. An N6-acetyllysine modification is found at Lys298. The residue at position 303 (Lys303) is an N6-acetyllysine; alternate. Lys303 is modified (N6-succinyllysine; alternate). Residue Lys344 is modified to N6-acetyllysine. Glu391 is an NAD(+) binding site.

Belongs to the aldehyde dehydrogenase family. Homotetramer.

It localises to the cytoplasm. It is found in the cytosol. It catalyses the reaction 4-(trimethylamino)butanal + NAD(+) + H2O = 4-(trimethylamino)butanoate + NADH + 2 H(+). The enzyme catalyses an aldehyde + NAD(+) + H2O = a carboxylate + NADH + 2 H(+). It carries out the reaction 4-aminobutanal + NAD(+) + H2O = 4-aminobutanoate + NADH + 2 H(+). The catalysed reaction is formaldehyde + NAD(+) + H2O = formate + NADH + 2 H(+). It catalyses the reaction acetaldehyde + NAD(+) + H2O = acetate + NADH + 2 H(+). The enzyme catalyses imidazole-4-acetaldehyde + NAD(+) + H2O = imidazole-4-acetate + NADH + 2 H(+). It carries out the reaction acrolein + NAD(+) + H2O = acrylate + NADH + 2 H(+). The catalysed reaction is (5-hydroxyindol-3-yl)acetaldehyde + NAD(+) + H2O = (5-hydroxyindol-3-yl)acetate + NADH + 2 H(+). It catalyses the reaction 3,4-dihydroxyphenylacetaldehyde + NAD(+) + H2O = 3,4-dihydroxyphenylacetate + NADH + 2 H(+). The enzyme catalyses spermine monoaldehyde + NAD(+) + H2O = N-(2-carboxyethyl)spermidine + NADH + 2 H(+). It carries out the reaction propanal + NAD(+) + H2O = propanoate + NADH + 2 H(+). The catalysed reaction is butanal + NAD(+) + H2O = butanoate + NADH + 2 H(+). It catalyses the reaction pentanal + NAD(+) + H2O = pentanoate + NADH + 2 H(+). The enzyme catalyses hexanal + NAD(+) + H2O = hexanoate + NADH + 2 H(+). It participates in amine and polyamine biosynthesis; carnitine biosynthesis. Converts gamma-trimethylaminobutyraldehyde into gamma-butyrobetaine with high efficiency (in vitro). Can catalyze the irreversible oxidation of a broad range of aldehydes to the corresponding acids in an NAD-dependent reaction, but with low efficiency. Catalyzes the oxidation of aldehydes arising from biogenic amines and polyamines. The polypeptide is 4-trimethylaminobutyraldehyde dehydrogenase (Mus musculus (Mouse)).